Reading from the N-terminus, the 505-residue chain is MVNKDVKQTTAFGAPVWDDNNVITAGPRGPVLLQSTWFLEKLAAFDRERIPERVVHAKGSGAYGTFTVTKDITKYTKAKIFSKVGKKTECFFRFSTVAGERGSADAVRDPRGFAMKYYTEEGNWDLVGNNTPVFFIRDAIKFPDFIHTQKRDPQTNLPNHDMVWDFWSNVPESLYQVTWVMSDRGIPKSFRHMDGFGSHTFSLINAKGERFWVKFHFHTMQGVKHLTNEEAAEVRKYDPDSNQRDLFNAIARGDFPKWKLSIQVMPEEDAKKYRFHPFDVTKIWYLQDYPLMEVGIVELNKNPENYFAEVEQAAFSPANVVPGIGYSPDRMLQGRLFSYGDTHRYRLGVNYPQIPVNKPRCPFHSSSRDGYMQNGYYGSLQNYTPSSLPGYKEDKSARDPKFNLAHIEKEFEVWNWDYRADDSDYYTQPGDYYRSLPADEKERLHDTIGESLAHVTHKEIVDKQLEHFKKADPKYAEGVKKALEKHQKMMKDMHGKDMHHTKKKK.

Active-site residues include histidine 56 and asparagine 129. Tyrosine 339 serves as a coordination point for heme.

It belongs to the catalase family. Heme serves as cofactor.

It localises to the cytoplasm. It catalyses the reaction 2 H2O2 = O2 + 2 H2O. Decomposes hydrogen peroxide into water and oxygen; serves to protect cells from the toxic effects of hydrogen peroxide. The protein is Catalase (katA) of Helicobacter pylori (strain ATCC 700392 / 26695) (Campylobacter pylori).